Here is a 501-residue protein sequence, read N- to C-terminus: Actin nucleation-promoting factor WASL (501 aa).

An N-acetylserine modification is found at serine 2. The region spanning 31-138 (LGKKCVTMSS…KAVTDLLGRR (108 aa)) is the WH1 domain. Disordered regions lie at residues 135–158 (LGRRQRKSEKRRDAPNGPNLPMAT) and 180–202 (SHTKEKKKGKAKKKRLTKADIGT). Over residues 183 to 195 (KEKKKGKAKKKRL) the composition is skewed to basic residues. Positions 200–213 (IGTPSNFQHIGHVG) constitute a CRIB domain. Residue serine 239 is modified to Phosphoserine; by TNK2. Residue tyrosine 253 is modified to Phosphotyrosine; by FAK1 and TNK2. Disordered regions lie at residues 263-405 (EAVK…KAAL) and 442-501 (QLKS…EWED). Pro residues-rich tracts occupy residues 273-361 (APPP…PPPL) and 368-387 (APPPPPPPPPPPGPPPPPGL). An Omega-N-methylarginine modification is found at arginine 304. WH2 domains lie at 401–418 (NKAALLDQIREGAQLKKV) and 429–446 (GRDALLDQIRQGIQLKSV). Residues 442 to 453 (QLKSVSDGQEST) are compositionally biased toward polar residues. Residues serine 480 and serine 481 each carry the phosphoserine modification. Positions 482-501 (DEDEDDDDEEDFQDDDEWED) are enriched in acidic residues.

Binds actin and the Arp2/3 complex. Interacts with CDC42. Interacts with FCHSD1. Interacts with FCHSD2. Binds to SH3 domains of GRB2. Interacts with the C-terminal SH3 domain of DNMBP. Interacts with SNX9. Interacts with the WW domains of PRPF40A/FBP11. Interacts with PTK2/FAK1. Interacts with PACSIN1, PACSIN2 and PACSIN3. Interacts with NOSTRIN. Binds to TNK2. Interacts with SNX33. Interacts with NONO (via second RRM domain); the interaction is direct. Component of a multiprotein complex with NONO and SFPQ; associates with the complex via direct interaction with NONO. In terms of processing, phosphorylation at Ser-239, Tyr-253, Ser-480 and Ser-481 enhances actin polymerization activity.

It localises to the cytoplasm. It is found in the cytoskeleton. Its subcellular location is the nucleus. Functionally, regulates actin polymerization by stimulating the actin-nucleating activity of the Arp2/3 complex. Involved in various processes, such as mitosis and cytokinesis, via its role in the regulation of actin polymerization. Together with CDC42, involved in the extension and maintenance of the formation of thin, actin-rich surface projections called filopodia. In addition to its role in the cytoplasm, also plays a role in the nucleus by regulating gene transcription, probably by promoting nuclear actin polymerization. Binds to HSF1/HSTF1 and forms a complex on heat shock promoter elements (HSE) that negatively regulates HSP90 expression. Plays a role in dendrite spine morphogenesis. The protein is Actin nucleation-promoting factor WASL (Wasl) of Rattus norvegicus (Rat).